The chain runs to 850 residues: cAMP-inducible prespore protein D7 (850 aa).

An N-terminal signal peptide occupies residues 1 to 24 (MYSKKYTSFVIVLILSCIISTCTS). Residues 119–130 (QNNNIGSSIGDS) are compositionally biased toward low complexity. Disordered stretches follow at residues 119–167 (QNNN…SKTT) and 787–850 (DAEL…QNQK). Over residues 131 to 143 (TGASTSPQFQSIN) the composition is skewed to polar residues. Low complexity predominate over residues 144-154 (GLSGASQSSGS). Basic and acidic residues predominate over residues 787–798 (DAELAKNNKQEN). Polar residues predominate over residues 801-820 (ENLVQEKQQSPDQIKNQLKN). Residues 837–850 (EKNQQLLEQEQNQK) show a composition bias toward low complexity.

This chain is cAMP-inducible prespore protein D7 (D7), found in Dictyostelium discoideum (Social amoeba).